A 160-amino-acid chain; its full sequence is Cytochrome b6-f complex subunit 4 (160 aa).

Helical transmembrane passes span 36–56 (LLYM…GLSV), 95–115 (LLGV…PFIE), and 131–151 (ILFL…TFPI).

The protein belongs to the cytochrome b family. PetD subfamily. In terms of assembly, the 4 large subunits of the cytochrome b6-f complex are cytochrome b6, subunit IV (17 kDa polypeptide, petD), cytochrome f and the Rieske protein, while the 4 small subunits are petG, petL, petM and petN. The complex functions as a dimer. Post-translationally, the N-terminus is blocked.

It localises to the plastid. Its subcellular location is the chloroplast thylakoid membrane. Its function is as follows. Component of the cytochrome b6-f complex, which mediates electron transfer between photosystem II (PSII) and photosystem I (PSI), cyclic electron flow around PSI, and state transitions. The polypeptide is Cytochrome b6-f complex subunit 4 (Chlamydomonas reinhardtii (Chlamydomonas smithii)).